The chain runs to 340 residues: UDP-3-O-acylglucosamine N-acyltransferase (340 aa).

The Proton acceptor role is filled by His-240.

It belongs to the transferase hexapeptide repeat family. LpxD subfamily. Homotrimer.

The enzyme catalyses a UDP-3-O-[(3R)-3-hydroxyacyl]-alpha-D-glucosamine + a (3R)-hydroxyacyl-[ACP] = a UDP-2-N,3-O-bis[(3R)-3-hydroxyacyl]-alpha-D-glucosamine + holo-[ACP] + H(+). It participates in bacterial outer membrane biogenesis; LPS lipid A biosynthesis. Catalyzes the N-acylation of UDP-3-O-acylglucosamine using 3-hydroxyacyl-ACP as the acyl donor. Is involved in the biosynthesis of lipid A, a phosphorylated glycolipid that anchors the lipopolysaccharide to the outer membrane of the cell. The sequence is that of UDP-3-O-acylglucosamine N-acyltransferase from Pseudoalteromonas translucida (strain TAC 125).